A 61-amino-acid chain; its full sequence is Small ribosomal subunit protein uS14B (61 aa).

4 residues coordinate Zn(2+): C24, C27, C40, and C43.

This sequence belongs to the universal ribosomal protein uS14 family. Zinc-binding uS14 subfamily. Part of the 30S ribosomal subunit. Contacts proteins S3 and S10. Zn(2+) serves as cofactor.

In terms of biological role, binds 16S rRNA, required for the assembly of 30S particles and may also be responsible for determining the conformation of the 16S rRNA at the A site. The chain is Small ribosomal subunit protein uS14B from Mycobacterium bovis (strain ATCC BAA-935 / AF2122/97).